The sequence spans 99 residues: NADH-ubiquinone oxidoreductase chain 4L (99 aa).

Transmembrane regions (helical) follow at residues 4–24 (MFLMFYLSMIMFLFGCMVFVS), 29–49 (LLSTLLSLEYMVLSLFIFLFF), and 63–83 (FFLTFCVCEGVLGLSILVSMI).

Belongs to the complex I subunit 4L family.

The protein resides in the mitochondrion membrane. The enzyme catalyses a ubiquinone + NADH + 5 H(+)(in) = a ubiquinol + NAD(+) + 4 H(+)(out). Core subunit of the mitochondrial membrane respiratory chain NADH dehydrogenase (Complex I) that is believed to belong to the minimal assembly required for catalysis. Complex I functions in the transfer of electrons from NADH to the respiratory chain. The immediate electron acceptor for the enzyme is believed to be ubiquinone. The protein is NADH-ubiquinone oxidoreductase chain 4L (ND4L) of Anopheles quadrimaculatus (Common malaria mosquito).